We begin with the raw amino-acid sequence, 241 residues long: Acyl-protein thioesterase 1 (241 aa).

Residues Ser122, Asp178, and His211 each act as charge relay system in the active site.

It belongs to the AB hydrolase superfamily. AB hydrolase 2 family.

The protein resides in the cytoplasm. It is found in the nucleus. The catalysed reaction is S-hexadecanoyl-L-cysteinyl-[protein] + H2O = L-cysteinyl-[protein] + hexadecanoate + H(+). Hydrolyzes fatty acids from S-acylated cysteine residues in proteins with a strong preference for palmitoylated G-alpha proteins over other acyl substrates. Mediates the deacylation of G-alpha proteins such as GPA1 in vivo, but has weak or no activity toward palmitoylated Ras proteins. Has weak lysophospholipase activity in vitro; however such activity may not exist in vivo. The protein is Acyl-protein thioesterase 1 of Aspergillus fumigatus (strain ATCC MYA-4609 / CBS 101355 / FGSC A1100 / Af293) (Neosartorya fumigata).